A 116-amino-acid polypeptide reads, in one-letter code: Small ribosomal subunit protein uS13 (116 aa).

Positions Gly-88 to Ala-116 are disordered.

The protein belongs to the universal ribosomal protein uS13 family. Part of the 30S ribosomal subunit. Forms a loose heterodimer with protein S19. Forms two bridges to the 50S subunit in the 70S ribosome.

Functionally, located at the top of the head of the 30S subunit, it contacts several helices of the 16S rRNA. In the 70S ribosome it contacts the 23S rRNA (bridge B1a) and protein L5 of the 50S subunit (bridge B1b), connecting the 2 subunits; these bridges are implicated in subunit movement. Contacts the tRNAs in the A and P-sites. This is Small ribosomal subunit protein uS13 from Finegoldia magna (strain ATCC 29328 / DSM 20472 / WAL 2508) (Peptostreptococcus magnus).